The sequence spans 248 residues: tRNA (guanine-N(1)-)-methyltransferase (248 aa).

S-adenosyl-L-methionine is bound by residues Gly-113 and 133-138 (VGDYVL).

This sequence belongs to the RNA methyltransferase TrmD family. In terms of assembly, homodimer.

It is found in the cytoplasm. It catalyses the reaction guanosine(37) in tRNA + S-adenosyl-L-methionine = N(1)-methylguanosine(37) in tRNA + S-adenosyl-L-homocysteine + H(+). Functionally, specifically methylates guanosine-37 in various tRNAs. In Shewanella oneidensis (strain ATCC 700550 / JCM 31522 / CIP 106686 / LMG 19005 / NCIMB 14063 / MR-1), this protein is tRNA (guanine-N(1)-)-methyltransferase.